We begin with the raw amino-acid sequence, 733 residues long: Photosystem I P700 chlorophyll a apoprotein A2 (733 aa).

8 helical membrane passes run 46–69, 134–157, 174–198, 272–290, 329–352, 368–394, 416–438, and 516–534; these read IFASHFGHLAIIFLWTSGNLFHVA, LYKGSIGLLLLASVLLIAGWLHLQ, LNHHLSGLLGFSSLAWTGHLVHVAI, MAHHHLAIAVVFIVAGHMY, LHMQLGLALACLGVATSLTAQHMY, AALYTHHQYIAGFLMVGAFAHGAIFFV, AIISHLSWASLFLGFHTLGLYIH, and FLVHHAIALGLHVTALILV. 2 residues coordinate [4Fe-4S] cluster: Cys-558 and Cys-567. 2 consecutive transmembrane segments (helical) span residues 574 to 595 and 642 to 664; these read AFYLAMFWMLNTIGWVTFYWHW and LSVWSWMFLFGHLIWATGFMFLI. Residues His-653, Met-661, and Tyr-669 each coordinate chlorophyll a. Phylloquinone is bound at residue Trp-670. The chain crosses the membrane as a helical span at residues 706 to 726; the sequence is LVGLVHFSVGYILTYAAFVIA.

Belongs to the PsaA/PsaB family. In terms of assembly, the PsaA/B heterodimer binds the P700 chlorophyll special pair and subsequent electron acceptors. PSI consists of a core antenna complex that captures photons, and an electron transfer chain that converts photonic excitation into a charge separation. The eukaryotic PSI reaction center is composed of at least 11 subunits. Requires P700 is a chlorophyll a/chlorophyll a' dimer, A0 is one or more chlorophyll a, A1 is one or both phylloquinones and FX is a shared 4Fe-4S iron-sulfur center. as cofactor.

The protein localises to the plastid. Its subcellular location is the chloroplast thylakoid membrane. The catalysed reaction is reduced [plastocyanin] + hnu + oxidized [2Fe-2S]-[ferredoxin] = oxidized [plastocyanin] + reduced [2Fe-2S]-[ferredoxin]. In terms of biological role, psaA and PsaB bind P700, the primary electron donor of photosystem I (PSI), as well as the electron acceptors A0, A1 and FX. PSI is a plastocyanin/cytochrome c6-ferredoxin oxidoreductase, converting photonic excitation into a charge separation, which transfers an electron from the donor P700 chlorophyll pair to the spectroscopically characterized acceptors A0, A1, FX, FA and FB in turn. Oxidized P700 is reduced on the lumenal side of the thylakoid membrane by plastocyanin or cytochrome c6. This is Photosystem I P700 chlorophyll a apoprotein A2 from Thalassiosira pseudonana (Marine diatom).